A 295-amino-acid polypeptide reads, in one-letter code: Pyridoxal 5'-phosphate synthase subunit PdxS (295 aa).

Asp-25 is a binding site for D-ribose 5-phosphate. Lys-82 acts as the Schiff-base intermediate with D-ribose 5-phosphate in catalysis. Gly-154 contributes to the D-ribose 5-phosphate binding site. Arg-166 is a binding site for D-glyceraldehyde 3-phosphate. Residues Gly-215 and 236 to 237 each bind D-ribose 5-phosphate; that span reads GS.

It belongs to the PdxS/SNZ family. As to quaternary structure, in the presence of PdxT, forms a dodecamer of heterodimers.

The enzyme catalyses aldehydo-D-ribose 5-phosphate + D-glyceraldehyde 3-phosphate + L-glutamine = pyridoxal 5'-phosphate + L-glutamate + phosphate + 3 H2O + H(+). Its pathway is cofactor biosynthesis; pyridoxal 5'-phosphate biosynthesis. Catalyzes the formation of pyridoxal 5'-phosphate from ribose 5-phosphate (RBP), glyceraldehyde 3-phosphate (G3P) and ammonia. The ammonia is provided by the PdxT subunit. Can also use ribulose 5-phosphate and dihydroxyacetone phosphate as substrates, resulting from enzyme-catalyzed isomerization of RBP and G3P, respectively. This is Pyridoxal 5'-phosphate synthase subunit PdxS from Bacillus cereus (strain Q1).